Reading from the N-terminus, the 163-residue chain is Large ribosomal subunit protein uL10 (163 aa).

It belongs to the universal ribosomal protein uL10 family. In terms of assembly, part of the ribosomal stalk of the 50S ribosomal subunit. The N-terminus interacts with L11 and the large rRNA to form the base of the stalk. The C-terminus forms an elongated spine to which L12 dimers bind in a sequential fashion forming a multimeric L10(L12)X complex.

Its function is as follows. Forms part of the ribosomal stalk, playing a central role in the interaction of the ribosome with GTP-bound translation factors. The chain is Large ribosomal subunit protein uL10 from Mannheimia succiniciproducens (strain KCTC 0769BP / MBEL55E).